A 400-amino-acid chain; its full sequence is MSHEIFEQAKPILKKIQNKGFKAYFVGGSVRDYIMQRPIHDVDITTSATPDEIESIFDKTIPVGKEHGTINVVFQNDNYEITTFRSEDEYIDHRRPSEVYFVRDLYQDVQRRDFTMNAIAMDLNYRLYDYFNGQQDINNRVIRTVGVPSERFSEDALRIIRGLRFQSQLNFQIDSDTLHAMSSQISDIQYLSVERVVVELKKLIMGNNVKQSFEVMQNMKAFNYIPFFKSFEMSHLHIDEPITFELWIAILIVQQPKDIQLSTLKISNQEKATIKKWVTLIQTLPKIQSKQSLITLVYDYNLNDIEILLSLHHLLKQNGLTTANHLIINEISIREANEKLPIHCRKELAINGKDILNHTNKNSGPWLKDTLREIEIAVISNQIVNTKEEILEWVDAHVKI.

2 residues coordinate ATP: G28 and R31. CTP is bound by residues G28 and R31. The Mg(2+) site is built by D41 and D43. Residues R112, D155, R158, R161, and R164 each coordinate ATP. The CTP site is built by R112, D155, R158, R161, and R164.

This sequence belongs to the tRNA nucleotidyltransferase/poly(A) polymerase family. Bacterial CCA-adding enzyme type 3 subfamily. In terms of assembly, homodimer. Requires Mg(2+) as cofactor.

The catalysed reaction is a tRNA precursor + 2 CTP + ATP = a tRNA with a 3' CCA end + 3 diphosphate. The enzyme catalyses a tRNA with a 3' CCA end + 2 CTP + ATP = a tRNA with a 3' CCACCA end + 3 diphosphate. Catalyzes the addition and repair of the essential 3'-terminal CCA sequence in tRNAs without using a nucleic acid template. Adds these three nucleotides in the order of C, C, and A to the tRNA nucleotide-73, using CTP and ATP as substrates and producing inorganic pyrophosphate. tRNA 3'-terminal CCA addition is required both for tRNA processing and repair. Also involved in tRNA surveillance by mediating tandem CCA addition to generate a CCACCA at the 3' terminus of unstable tRNAs. While stable tRNAs receive only 3'-terminal CCA, unstable tRNAs are marked with CCACCA and rapidly degraded. The protein is CCA-adding enzyme of Staphylococcus epidermidis (strain ATCC 12228 / FDA PCI 1200).